We begin with the raw amino-acid sequence, 87 residues long: Small ribosomal subunit protein bS18 (87 aa).

Belongs to the bacterial ribosomal protein bS18 family. Part of the 30S ribosomal subunit. Forms a tight heterodimer with protein bS6.

Functionally, binds as a heterodimer with protein bS6 to the central domain of the 16S rRNA, where it helps stabilize the platform of the 30S subunit. The sequence is that of Small ribosomal subunit protein bS18 from Oleidesulfovibrio alaskensis (strain ATCC BAA-1058 / DSM 17464 / G20) (Desulfovibrio alaskensis).